The primary structure comprises 417 residues: UDP-N-acetylglucosamine 1-carboxyvinyltransferase (417 aa).

Residue 22-23 (KN) coordinates phosphoenolpyruvate. Position 92 (arginine 92) interacts with UDP-N-acetyl-alpha-D-glucosamine. The active-site Proton donor is the cysteine 116. Cysteine 116 carries the post-translational modification 2-(S-cysteinyl)pyruvic acid O-phosphothioketal. Residues 161–164 (KVSV), aspartate 305, and isoleucine 327 each bind UDP-N-acetyl-alpha-D-glucosamine.

Belongs to the EPSP synthase family. MurA subfamily.

Its subcellular location is the cytoplasm. It catalyses the reaction phosphoenolpyruvate + UDP-N-acetyl-alpha-D-glucosamine = UDP-N-acetyl-3-O-(1-carboxyvinyl)-alpha-D-glucosamine + phosphate. Its pathway is cell wall biogenesis; peptidoglycan biosynthesis. Cell wall formation. Adds enolpyruvyl to UDP-N-acetylglucosamine. This chain is UDP-N-acetylglucosamine 1-carboxyvinyltransferase, found in Pelagibacter ubique (strain HTCC1062).